The following is a 500-amino-acid chain: MIDKLSWIAVYPELVLLVMACLIALVDLGVKSPRRTLTYALTLLTLGAVAVMEASYALGGQTFYGFGNMVVVDPMGSWLKCFSSIALMITVVYGRPYAADRDMLRGGEFFTLSLFALLGMFVMISGHNFLVLYMGLELMTLCSYALVALRRDDAQATEAAMKYFVLGALASGFLLYGLSMLYGATGSLNINEVFNAIASRQVKHQVLVFGLVFIVAGLAFKLGAVPFHMWLPDVYQGAPTAVTLIIGGAPQLAAFAMTIRLLVEGLLPLAIDWQQMLALMAIGSLVIGNLAAVAQTNLKRMLAFSTISQMGFLLLGLLAGVVNGNQLHTESAYGAAMFYALTYVLTTLAAFGIILLLARAGHESEEITDLSGLNQRSPLYAGVMAMSMFSLAGLPPLVGFYAKLGVLQALISSGQTSYLVLAVFAVFMSLIGAFYYLRVIKVMYFDAPHSHNAQPISAPADAQIVLAINGALLLVLGIAPSSLMTLCAQSINSIVNSLGV.

Helical transmembrane passes span 6–26 (SWIA…IALV), 40–60 (ALTL…ALGG), 69–89 (MVVV…ALMI), 106–125 (GGEF…VMIS), 129–151 (FLVL…ALRR), 164–184 (FVLG…LYGA), 207–227 (LVFG…AVPF), 239–259 (PTAV…AMTI), 276–296 (MLAL…VAQT), 302–322 (LAFS…AGVV), 337–357 (MFYA…ILLL), 380–400 (YAGV…LVGF), 417–437 (SYLV…FYYL), and 464–484 (IVLA…SSLM).

Belongs to the complex I subunit 2 family. NDH-1 is composed of 14 different subunits. Subunits NuoA, H, J, K, L, M, N constitute the membrane sector of the complex.

The protein localises to the cell inner membrane. The catalysed reaction is a quinone + NADH + 5 H(+)(in) = a quinol + NAD(+) + 4 H(+)(out). NDH-1 shuttles electrons from NADH, via FMN and iron-sulfur (Fe-S) centers, to quinones in the respiratory chain. The immediate electron acceptor for the enzyme in this species is believed to be ubiquinone. Couples the redox reaction to proton translocation (for every two electrons transferred, four hydrogen ions are translocated across the cytoplasmic membrane), and thus conserves the redox energy in a proton gradient. The protein is NADH-quinone oxidoreductase subunit N of Polaromonas naphthalenivorans (strain CJ2).